The chain runs to 1066 residues: DNA-directed RNA polymerase subunit beta (1066 aa).

The protein belongs to the RNA polymerase beta chain family. As to quaternary structure, in plastids the minimal PEP RNA polymerase catalytic core is composed of four subunits: alpha, beta, beta', and beta''. When a (nuclear-encoded) sigma factor is associated with the core the holoenzyme is formed, which can initiate transcription.

Its subcellular location is the plastid. The protein resides in the chloroplast. It catalyses the reaction RNA(n) + a ribonucleoside 5'-triphosphate = RNA(n+1) + diphosphate. Functionally, DNA-dependent RNA polymerase catalyzes the transcription of DNA into RNA using the four ribonucleoside triphosphates as substrates. The protein is DNA-directed RNA polymerase subunit beta of Coffea arabica (Arabian coffee).